Here is a 199-residue protein sequence, read N- to C-terminus: Recombination protein RecR (199 aa).

Residues 57–72 (CQACRTFTEETLCPIC) form a C4-type zinc finger. The 96-residue stretch at 81–176 (EVICVVETPA…SVSRIAHGVP (96 aa)) folds into the Toprim domain.

This sequence belongs to the RecR family.

In terms of biological role, may play a role in DNA repair. It seems to be involved in an RecBC-independent recombinational process of DNA repair. It may act with RecF and RecO. The sequence is that of Recombination protein RecR from Shewanella woodyi (strain ATCC 51908 / MS32).